The primary structure comprises 417 residues: Serine hydroxymethyltransferase (417 aa).

(6S)-5,6,7,8-tetrahydrofolate-binding positions include Leu120 and 124 to 126 (GHL). Lys229 carries the post-translational modification N6-(pyridoxal phosphate)lysine.

The protein belongs to the SHMT family. In terms of assembly, homodimer. The cofactor is pyridoxal 5'-phosphate.

It localises to the cytoplasm. It carries out the reaction (6R)-5,10-methylene-5,6,7,8-tetrahydrofolate + glycine + H2O = (6S)-5,6,7,8-tetrahydrofolate + L-serine. It participates in one-carbon metabolism; tetrahydrofolate interconversion. The protein operates within amino-acid biosynthesis; glycine biosynthesis; glycine from L-serine: step 1/1. In terms of biological role, catalyzes the reversible interconversion of serine and glycine with tetrahydrofolate (THF) serving as the one-carbon carrier. This reaction serves as the major source of one-carbon groups required for the biosynthesis of purines, thymidylate, methionine, and other important biomolecules. Also exhibits THF-independent aldolase activity toward beta-hydroxyamino acids, producing glycine and aldehydes, via a retro-aldol mechanism. This is Serine hydroxymethyltransferase from Anaeromyxobacter dehalogenans (strain 2CP-1 / ATCC BAA-258).